The following is a 337-amino-acid chain: Ketol-acid reductoisomerase (NADP(+)) (337 aa).

Positions 2–182 (AKIFYDNDAD…GATRAGVLLT (181 aa)) constitute a KARI N-terminal Rossmann domain. NADP(+)-binding positions include 25 to 28 (YGSQ), Ser-51, Ser-53, and 83 to 86 (DTSQ). Residue His-108 is part of the active site. Gly-134 contributes to the NADP(+) binding site. The region spanning 183–328 (TFAEETETDL…ANLRKMMPFI (146 aa)) is the KARI C-terminal knotted domain. Mg(2+)-binding residues include Asp-191, Glu-195, Glu-227, and Glu-231. Ser-252 contacts substrate.

It belongs to the ketol-acid reductoisomerase family. It depends on Mg(2+) as a cofactor.

It carries out the reaction (2R)-2,3-dihydroxy-3-methylbutanoate + NADP(+) = (2S)-2-acetolactate + NADPH + H(+). The catalysed reaction is (2R,3R)-2,3-dihydroxy-3-methylpentanoate + NADP(+) = (S)-2-ethyl-2-hydroxy-3-oxobutanoate + NADPH + H(+). It functions in the pathway amino-acid biosynthesis; L-isoleucine biosynthesis; L-isoleucine from 2-oxobutanoate: step 2/4. The protein operates within amino-acid biosynthesis; L-valine biosynthesis; L-valine from pyruvate: step 2/4. Functionally, involved in the biosynthesis of branched-chain amino acids (BCAA). Catalyzes an alkyl-migration followed by a ketol-acid reduction of (S)-2-acetolactate (S2AL) to yield (R)-2,3-dihydroxy-isovalerate. In the isomerase reaction, S2AL is rearranged via a Mg-dependent methyl migration to produce 3-hydroxy-3-methyl-2-ketobutyrate (HMKB). In the reductase reaction, this 2-ketoacid undergoes a metal-dependent reduction by NADPH to yield (R)-2,3-dihydroxy-isovalerate. This Sorangium cellulosum (strain So ce56) (Polyangium cellulosum (strain So ce56)) protein is Ketol-acid reductoisomerase (NADP(+)).